A 346-amino-acid chain; its full sequence is MGNSRNKRGKREANRQRTVEALARAQSGADTGAALQLPQKKFYRQRAHANPFSDHQLKYPLSPAHMDWASHYPAFENPDPAQTNLGGFRKLLKDVEVVDIGCGFGGLLIGLAPLLPETLIVGMEIRIQVLDYVNTRIQALRTQQRHFKLKSAGGGGSDAAPESPAAPPTPSEAASPDSTTPSEQQAPTTLVPGGFQNISAIRSNTMKFFPNFFGRGQLSKIFICFPDPHFKARKHKMRIISETLNAEYAYALRPGGLLYTITDVEEYHHWILRHFREPEVDGAVPCDDGADGIKELFERVSDEELQQDPCVEVMREATEEGKKVSRNKGNKYVAVFRRKADPEWPA.

S-adenosyl-L-methionine is bound by residues glycine 101 and 124-125 (EI). Residues 149-191 (LKSAGGGGSDAAPESPAAPPTPSEAASPDSTTPSEQQAPTTLV) are disordered. A compositionally biased stretch (low complexity) spans 171 to 182 (SEAASPDSTTPS). S-adenosyl-L-methionine contacts are provided by residues 204–205 (NT) and cysteine 224. The active site involves aspartate 227. S-adenosyl-L-methionine is bound at residue 318–320 (TEE).

The protein belongs to the class I-like SAM-binding methyltransferase superfamily. TrmB family. In terms of assembly, forms a complex with trm82.

The protein localises to the nucleus. It carries out the reaction guanosine(46) in tRNA + S-adenosyl-L-methionine = N(7)-methylguanosine(46) in tRNA + S-adenosyl-L-homocysteine. It participates in tRNA modification; N(7)-methylguanine-tRNA biosynthesis. Its function is as follows. Catalyzes the formation of N(7)-methylguanine at position 46 (m7G46) in tRNA. The polypeptide is tRNA (guanine-N(7)-)-methyltransferase (trm8) (Aspergillus terreus (strain NIH 2624 / FGSC A1156)).